The primary structure comprises 143 residues: Snake venom vascular endothelial growth factor toxin (143 aa).

A signal peptide spans 1–24; the sequence is MAVYLLAVAILFCIQGWPSGTVQG. E25 is modified (pyrrolidone carboxylic acid (Glu)). Intrachain disulfides connect C38-C80, C69-C115, and C73-C117. The disordered stretch occupies residues 117–143; it reads CRPRSPGDVNDGRNPKEGEPRARFPFV.

It belongs to the PDGF/VEGF growth factor family. Snake venom VEGF subfamily. In terms of assembly, homodimer; disulfide-linked. Interacts with VEGF receptor-1 (FLT1) with a high affinity, whereas it binds to VEGF receptor-2 (KDR) with a low affinity. Does not bind to VEGFR-3/FLT4 and neuropilin-1 (NRP1). In terms of tissue distribution, expressed by the venom gland.

The protein localises to the secreted. Its function is as follows. Snake venom VEGFs may contribute to venom dispersion and prey subjugation by inducing vascular permeability and hypotension. This protein activates the vascular endothelial growth factor receptor-1 (VEGFR-1/FLT1), and consequently promotes the proliferation and tissue factor production of endothelial cells, the neovascularization in the chicken chorioallantoic membrane, and increases vascular permeability. Also stimulates tissue-factor production and human monocyte chemotaxis. This Protobothrops mucrosquamatus (Taiwan habu) protein is Snake venom vascular endothelial growth factor toxin.